The chain runs to 828 residues: Periplasmic nitrate reductase (828 aa).

Residues 1–31 constitute a signal peptide (tat-type signal); it reads MKLSRRSFMKANAVAAAAAAAGLSVPGVARA. The region spanning 39–95 is the 4Fe-4S Mo/W bis-MGD-type domain; the sequence is IKWDKAPCRFCGTGCGVLVGTQQGRVVACQGDPDAPVNRGLNCIKGYFLPKIMYGKD. The [4Fe-4S] cluster site is built by cysteine 46, cysteine 49, cysteine 53, and cysteine 81. Residues lysine 83, glutamine 150, asparagine 175, cysteine 179, 212 to 219, 243 to 247, 262 to 264, methionine 372, glutamine 376, asparagine 482, 508 to 509, lysine 531, aspartate 558, and 718 to 727 contribute to the Mo-bis(molybdopterin guanine dinucleotide) site; these read WGANMAEM, STYQH, QSD, SD, and TGRVLEHWHT. Phenylalanine 794 is a substrate binding site. Mo-bis(molybdopterin guanine dinucleotide) contacts are provided by asparagine 802 and lysine 819.

It belongs to the prokaryotic molybdopterin-containing oxidoreductase family. NasA/NapA/NarB subfamily. Component of the periplasmic nitrate reductase NapAB complex composed of NapA and NapB. The cofactor is [4Fe-4S] cluster. Mo-bis(molybdopterin guanine dinucleotide) serves as cofactor. In terms of processing, predicted to be exported by the Tat system. The position of the signal peptide cleavage has not been experimentally proven.

The protein resides in the periplasm. The enzyme catalyses 2 Fe(II)-[cytochrome] + nitrate + 2 H(+) = 2 Fe(III)-[cytochrome] + nitrite + H2O. Functionally, catalytic subunit of the periplasmic nitrate reductase complex NapAB. Receives electrons from NapB and catalyzes the reduction of nitrate to nitrite. The polypeptide is Periplasmic nitrate reductase (Escherichia coli O157:H7 (strain EC4115 / EHEC)).